Reading from the N-terminus, the 445-residue chain is Probable D-serine dehydratase (445 aa).

Position 111 is an N6-(pyridoxal phosphate)lysine (Lys111).

This sequence belongs to the serine/threonine dehydratase family. DsdA subfamily. It depends on pyridoxal 5'-phosphate as a cofactor.

The catalysed reaction is D-serine = pyruvate + NH4(+). This is Probable D-serine dehydratase from Burkholderia pseudomallei (strain 1106a).